Here is a 360-residue protein sequence, read N- to C-terminus: Phosphoserine aminotransferase (360 aa).

L-glutamate is bound at residue R42. 4 residues coordinate pyridoxal 5'-phosphate: W102, T152, D171, and Q194. K195 carries the post-translational modification N6-(pyridoxal phosphate)lysine. 237 to 238 (NT) lines the pyridoxal 5'-phosphate pocket.

This sequence belongs to the class-V pyridoxal-phosphate-dependent aminotransferase family. SerC subfamily. As to quaternary structure, homodimer. Requires pyridoxal 5'-phosphate as cofactor.

The protein resides in the cytoplasm. It catalyses the reaction O-phospho-L-serine + 2-oxoglutarate = 3-phosphooxypyruvate + L-glutamate. The catalysed reaction is 4-(phosphooxy)-L-threonine + 2-oxoglutarate = (R)-3-hydroxy-2-oxo-4-phosphooxybutanoate + L-glutamate. Its pathway is amino-acid biosynthesis; L-serine biosynthesis; L-serine from 3-phospho-D-glycerate: step 2/3. It functions in the pathway cofactor biosynthesis; pyridoxine 5'-phosphate biosynthesis; pyridoxine 5'-phosphate from D-erythrose 4-phosphate: step 3/5. Functionally, catalyzes the reversible conversion of 3-phosphohydroxypyruvate to phosphoserine and of 3-hydroxy-2-oxo-4-phosphonooxybutanoate to phosphohydroxythreonine. This is Phosphoserine aminotransferase from Coxiella burnetii (strain Dugway 5J108-111).